The sequence spans 401 residues: G2/mitotic-specific cyclin-B1 (401 aa).

This sequence belongs to the cyclin family. Cyclin AB subfamily. Interacts with the CDK1 protein kinase to form a serine/threonine kinase holoenzyme complex also known as maturation promoting factor (MPF). The cyclin subunit imparts substrate specificity to the complex.

Functionally, essential for the control of the cell cycle at the G2/M (mitosis) transition. This chain is G2/mitotic-specific cyclin-B1 (ccnb1), found in Oryzias luzonensis (Luzon ricefish).